The primary structure comprises 631 residues: PTS system beta-glucoside-specific EIIBCA component (631 aa).

One can recognise a PTS EIIB type-1 domain in the interval M1–S86. C26 serves as the catalytic Phosphocysteine intermediate; for EIIB activity. One can recognise a PTS EIIC type-1 domain in the interval D105–S466. A run of 10 helical transmembrane segments spans residues A120–S140, L146–A166, F175–A195, F206–A226, F248–P268, V295–L315, L328–L348, I358–V378, P385–T405, and A434–V454. Residues D501–N605 form the PTS EIIA type-1 domain. The active-site Tele-phosphohistidine intermediate; for EIIA activity is H553.

The protein resides in the cell inner membrane. The phosphoenolpyruvate-dependent sugar phosphotransferase system (sugar PTS), a major carbohydrate active -transport system, catalyzes the phosphorylation of incoming sugar substrates concomitantly with their translocation across the cell membrane. This system is involved in beta-glucoside transport. Functionally, acts both as a kinase and as a phosphatase on ArbG. The sequence is that of PTS system beta-glucoside-specific EIIBCA component (arbF) from Dickeya chrysanthemi (Pectobacterium chrysanthemi).